The primary structure comprises 440 residues: Tol-Pal system protein TolB (440 aa).

Positions 1-21 are cleaved as a signal peptide; the sequence is MKIFGKWLLVTLLICSMPVKA.

It belongs to the TolB family. The Tol-Pal system is composed of five core proteins: the inner membrane proteins TolA, TolQ and TolR, the periplasmic protein TolB and the outer membrane protein Pal. They form a network linking the inner and outer membranes and the peptidoglycan layer.

It is found in the periplasm. Functionally, part of the Tol-Pal system, which plays a role in outer membrane invagination during cell division and is important for maintaining outer membrane integrity. This is Tol-Pal system protein TolB from Shewanella halifaxensis (strain HAW-EB4).